The following is a 166-amino-acid chain: Heme-degrading monooxygenase HmoB (166 aa).

A Fe cation-binding site is contributed by Asn33. The ABM domain maps to 66–153 (FAVLNNIAVT…SAGIDTTSIF (88 aa)). His138 lines the heme pocket.

This sequence belongs to the antibiotic biosynthesis monooxygenase family. Homodimer.

Its subcellular location is the cytoplasm. The enzyme catalyses heme b + 3 reduced [NADPH--hemoprotein reductase] + 3 O2 = biliverdin IXalpha + CO + Fe(2+) + 3 oxidized [NADPH--hemoprotein reductase] + 3 H2O + H(+). Catalyzes the oxidative degradation of the heme macrocyclic porphyrin ring in the presence of a suitable electron donor such as ascorbate or NADPH--cytochrome P450 reductase, with subsequent release of free iron. The polypeptide is Heme-degrading monooxygenase HmoB (hmoB) (Bacillus subtilis (strain 168)).